Reading from the N-terminus, the 672-residue chain is Spermatid perinuclear RNA-binding protein (672 aa).

The DZF domain maps to 5-363 (RSFANDDRHV…ALKRPFEDGL (359 aa)). Disordered stretches follow at residues 52-73 (TNKG…GENY) and 349-371 (GAGS…DPNK). Positions 357-371 (RPFEDGLGDDKDPNK) are enriched in basic and acidic residues. Residues 387-453 (DLMNALMRLN…AVKVLQAMGY (67 aa)) enclose the DRBM 1 domain. The segment covering 466-476 (SDEKSDNESKN) has biased composition (basic and acidic residues). Residues 466 to 499 (SDEKSDNESKNETVSSNSSNNTGNSTTETSSTLE) form a disordered region. Residues 477-497 (ETVSSNSSNNTGNSTTETSST) show a composition bias toward low complexity. The 67-residue stretch at 510-576 (SGKNPVMELN…ALAALEKLFS (67 aa)) folds into the DRBM 2 domain. An asymmetric dimethylarginine mark is found at Arg-612 and Arg-617.

In terms of assembly, interacts with EIF2AK2. Associates with microtubules; it is unsure whether such interaction is direct or indirect.

It is found in the cytoplasm. In terms of biological role, involved in spermatogenesis and sperm function. Plays a role in regulation of cell growth. Binds to double-stranded DNA and RNA. Binds most efficiently to poly(I:C) RNA than to poly(dI:dC) DNA. Binds also to single-stranded poly(G) RNA. Binds non-specifically to the mRNA PRM1 3'-UTR and adenovirus VA RNA. The polypeptide is Spermatid perinuclear RNA-binding protein (STRBP) (Pongo abelii (Sumatran orangutan)).